We begin with the raw amino-acid sequence, 397 residues long: Mycinamicin IV hydroxylase/epoxidase (397 aa).

A disordered region spans residues 63–86 (RGPSMTRDEPRTRPEMVKGGLLSM). Residues 68–78 (TRDEPRTRPEM) are compositionally biased toward basic and acidic residues. Substrate is bound at residue glycine 81. Residues histidine 91, arginine 95, arginine 288, histidine 344, and cysteine 346 each contribute to the heme site.

It belongs to the cytochrome P450 family. It depends on heme as a cofactor.

It participates in antibiotic biosynthesis; mycinamicin biosynthesis. In terms of biological role, involved in the biosynthesis of mycinamicin, a 16-membered macrolide antibiotic. Catalyzes consecutive hydroxylation (at C14) and epoxidation (at C12-C13) reactions with mycinamicin IV as initial substrate, leading to mycinamicin II. These reactions require prior dimethylation of 6-deoxyallose to mycinose for effective conversion by the dual function MycG enzyme. This chain is Mycinamicin IV hydroxylase/epoxidase, found in Micromonospora griseorubida.